The following is a 116-amino-acid chain: Large ribosomal subunit protein bL17 (116 aa).

This sequence belongs to the bacterial ribosomal protein bL17 family. As to quaternary structure, part of the 50S ribosomal subunit. Contacts protein L32.

This is Large ribosomal subunit protein bL17 from Synechococcus sp. (strain WH7803).